The sequence spans 463 residues: Bifunctional protein GlmU (463 aa).

The pyrophosphorylase stretch occupies residues 1 to 233; the sequence is MSKKSTFIIL…NFEVMGINSR (233 aa). Residues 10–13, Lys24, Gln76, 81–82, 104–106, Gly143, Glu158, Asn173, and Asn231 each bind UDP-N-acetyl-alpha-D-glucosamine; these read LAAG, GT, and YGD. Asp106 contacts Mg(2+). A Mg(2+)-binding site is contributed by Asn231. A linker region spans residues 234–254; that stretch reads YELFVAEQELKLRINKEHLSK. The N-acetyltransferase stretch occupies residues 255–463; the sequence is GVQIIDIYST…LRRKQMYENR (209 aa). Residues Arg336 and Lys354 each contribute to the UDP-N-acetyl-alpha-D-glucosamine site. Residue His366 is the Proton acceptor of the active site. Positions 369 and 380 each coordinate UDP-N-acetyl-alpha-D-glucosamine. Acetyl-CoA-binding positions include 389–390, Ala426, and Arg443; that span reads NY.

This sequence in the N-terminal section; belongs to the N-acetylglucosamine-1-phosphate uridyltransferase family. The protein in the C-terminal section; belongs to the transferase hexapeptide repeat family. Homotrimer. Requires Mg(2+) as cofactor.

It is found in the cytoplasm. It catalyses the reaction alpha-D-glucosamine 1-phosphate + acetyl-CoA = N-acetyl-alpha-D-glucosamine 1-phosphate + CoA + H(+). The catalysed reaction is N-acetyl-alpha-D-glucosamine 1-phosphate + UTP + H(+) = UDP-N-acetyl-alpha-D-glucosamine + diphosphate. The protein operates within nucleotide-sugar biosynthesis; UDP-N-acetyl-alpha-D-glucosamine biosynthesis; N-acetyl-alpha-D-glucosamine 1-phosphate from alpha-D-glucosamine 6-phosphate (route II): step 2/2. It participates in nucleotide-sugar biosynthesis; UDP-N-acetyl-alpha-D-glucosamine biosynthesis; UDP-N-acetyl-alpha-D-glucosamine from N-acetyl-alpha-D-glucosamine 1-phosphate: step 1/1. Its pathway is bacterial outer membrane biogenesis; LPS lipid A biosynthesis. In terms of biological role, catalyzes the last two sequential reactions in the de novo biosynthetic pathway for UDP-N-acetylglucosamine (UDP-GlcNAc). The C-terminal domain catalyzes the transfer of acetyl group from acetyl coenzyme A to glucosamine-1-phosphate (GlcN-1-P) to produce N-acetylglucosamine-1-phosphate (GlcNAc-1-P), which is converted into UDP-GlcNAc by the transfer of uridine 5-monophosphate (from uridine 5-triphosphate), a reaction catalyzed by the N-terminal domain. This Caldicellulosiruptor saccharolyticus (strain ATCC 43494 / DSM 8903 / Tp8T 6331) protein is Bifunctional protein GlmU.